Reading from the N-terminus, the 597-residue chain is Elongation factor 4 (597 aa).

Positions 2–184 (KNIRNFSIIA…RLVRDIPAPE (183 aa)) constitute a tr-type G domain. GTP contacts are provided by residues 14-19 (DHGKST) and 131-134 (NKID).

It belongs to the TRAFAC class translation factor GTPase superfamily. Classic translation factor GTPase family. LepA subfamily.

Its subcellular location is the cell inner membrane. The catalysed reaction is GTP + H2O = GDP + phosphate + H(+). Functionally, required for accurate and efficient protein synthesis under certain stress conditions. May act as a fidelity factor of the translation reaction, by catalyzing a one-codon backward translocation of tRNAs on improperly translocated ribosomes. Back-translocation proceeds from a post-translocation (POST) complex to a pre-translocation (PRE) complex, thus giving elongation factor G a second chance to translocate the tRNAs correctly. Binds to ribosomes in a GTP-dependent manner. The protein is Elongation factor 4 of Edwardsiella ictaluri (strain 93-146).